A 287-amino-acid chain; its full sequence is Bifunctional protein FolD (287 aa).

NADP(+) contacts are provided by residues 171–173 and Ile237; that span reads GHS.

Belongs to the tetrahydrofolate dehydrogenase/cyclohydrolase family. As to quaternary structure, homodimer.

The catalysed reaction is (6R)-5,10-methylene-5,6,7,8-tetrahydrofolate + NADP(+) = (6R)-5,10-methenyltetrahydrofolate + NADPH. It carries out the reaction (6R)-5,10-methenyltetrahydrofolate + H2O = (6R)-10-formyltetrahydrofolate + H(+). The protein operates within one-carbon metabolism; tetrahydrofolate interconversion. Functionally, catalyzes the oxidation of 5,10-methylenetetrahydrofolate to 5,10-methenyltetrahydrofolate and then the hydrolysis of 5,10-methenyltetrahydrofolate to 10-formyltetrahydrofolate. This chain is Bifunctional protein FolD, found in Methanosarcina barkeri (strain Fusaro / DSM 804).